Here is a 413-residue protein sequence, read N- to C-terminus: Palmitoyl-acyl carrier protein thioesterase, chloroplastic (413 aa).

A chloroplast-targeting transit peptide spans 1-57 (MVATAVTSAFFPVTSSPDSSDSKNKKLGSIKSKPSVSSGSLQVKANAQAPPKINGTV). The disordered stretch occupies residues 12–79 (PVTSSPDSSD…DGASSPPPRT (68 aa)). Over residues 29 to 40 (SIKSKPSVSSGS) the composition is skewed to low complexity. Catalysis depends on residues Asn310, His312, and Cys347. Residues 394 to 413 (WRPKHAKSSANMDQITAKRA) are disordered.

This sequence belongs to the acyl-ACP thioesterase family.

The protein resides in the plastid. It is found in the chloroplast. It carries out the reaction hexadecanoyl-[ACP] + H2O = hexadecanoate + holo-[ACP] + H(+). Functionally, plays an essential role in chain termination during de novo fatty acid synthesis. High thioesterase activity for palmitoyl-ACP versus other acyl-ACPs. This is Palmitoyl-acyl carrier protein thioesterase, chloroplastic (FATB1) from Gossypium hirsutum (Upland cotton).